A 174-amino-acid chain; its full sequence is Sarcoplasmic calcium-binding protein (174 aa).

An N-acetylserine modification is found at serine 1. EF-hand domains lie at 3–38, 55–90, 91–126, and 125–160; these read LWVQ…FAKE, GVWD…NAKA, VVEG…LGLN, and LNPD…FFIN. The Ca(2+) site is built by aspartate 16, aspartate 18, aspartate 20, and aspartate 27. Aspartate 104, asparagine 106, aspartate 108, methionine 110, glutamate 115, aspartate 138, asparagine 140, aspartate 142, and glutamate 149 together coordinate Ca(2+).

Its function is as follows. Like parvalbumins, SCPs seem to be more abundant in fast contracting muscles, but no functional relationship can be established from this distribution. The chain is Sarcoplasmic calcium-binding protein from Perinereis vancaurica tetradentata (Sandworm).